We begin with the raw amino-acid sequence, 134 residues long: GLIGAPIAAPLGYAAPFARAAVAAPVAVAKTVVADEYDPHPQYSYGYDIQDGLTGDSKNQQETRDGDVVQGSYSLVDPDGTRRTVEYTADPINGFNAVVHREPLVAKAVVAAPAIAKVHAPLAYGAPVAKYAFH.

Residues 23–26 (AAPV) form repeat 1. The segment at 38-80 (DPHPQYSYGYDIQDGLTGDSKNQQETRDGDVVQGSYSLVDPDG) is disordered. In terms of domain architecture, Chitin-binding type R&amp;R spans 40-106 (HPQYSYGYDI…AVVHREPLVA (67 aa)). The stretch at 111-114 (AAPA) is repeat 2.

Its function is as follows. Component of the cuticle of the larva of Tenebrio molitor. The polypeptide is Larval cuticle protein A3A (Tenebrio molitor (Yellow mealworm beetle)).